Reading from the N-terminus, the 146-residue chain is VHLTDGEKNAISTAWGKVNAAEIGAEALGRLLVVYPWTQRFFDSFGDLSSASAVMGNAKVKAHGKKVIDSFSNGLKHLDNLKGTFASLSELHCDKLHVDPENFKLLGNMIVIVMAHHLGKDFTPEAQAAFQKVVAGVANALSHKYH.

An N-acetylvaline modification is found at Val-1. Positions 2-146 (HLTDGEKNAI…VANALSHKYH (145 aa)) constitute a Globin domain. At Ser-44 the chain carries Phosphoserine. Residue Lys-59 is modified to N6-acetyllysine. Position 63 (His-63) interacts with heme b. Lys-82 is modified (N6-acetyllysine). Heme b is bound at residue His-92. Cys-93 is subject to S-nitrosocysteine. The residue at position 144 (Lys-144) is an N6-acetyllysine.

This sequence belongs to the globin family. As to quaternary structure, heterotetramer of two alpha chains and two beta chains. As to expression, red blood cells.

In terms of biological role, involved in oxygen transport from the lung to the various peripheral tissues. This is Hemoglobin subunit beta-S/F from Urocitellus townsendii (Townsend's ground squirrel).